The following is a 614-amino-acid chain: uncharacterized protein (614 aa).

The next 4 membrane-spanning stretches (helical) occupy residues 41–61 (GWIF…AVLF), 87–107 (LIGM…ASAV), 157–177 (DTVL…ITSG), and 178–198 (VVLV…IILF). The ABC transmembrane type-1 domain maps to 43 to 330 (IFLLAILTVG…IMWESARLFE (288 aa)). One can recognise an ABC transporter domain in the interval 364–603 (IKFNDITFAY…NGLYAKLWNH (240 aa)). Residue 397 to 404 (GRSGAGKS) coordinates ATP.

The protein belongs to the ABC transporter superfamily.

It localises to the cell membrane. This is an uncharacterized protein from Haemophilus influenzae (strain ATCC 51907 / DSM 11121 / KW20 / Rd).